The chain runs to 455 residues: NADH-quinone oxidoreductase subunit N (455 aa).

The next 11 membrane-spanning stretches (helical) occupy residues 25 to 45 (AIVP…ISEY), 61 to 81 (FSVA…ALSH), 99 to 119 (VFLL…MFFL), 149 to 169 (FLMG…IYGA), 193 to 213 (IGIV…PFHF), 257 to 277 (IQII…IMAL), 285 to 305 (MFAF…LLTS), 312 to 332 (LYYA…VMYV), 355 to 375 (AGIL…SGFF), 391 to 411 (IVVF…FKII), and 432 to 452 (IVAV…NVVL).

Belongs to the complex I subunit 2 family. In terms of assembly, NDH-1 is composed of 14 different subunits. Subunits NuoA, H, J, K, L, M, N constitute the membrane sector of the complex.

Its subcellular location is the cell inner membrane. It carries out the reaction a quinone + NADH + 5 H(+)(in) = a quinol + NAD(+) + 4 H(+)(out). Functionally, NDH-1 shuttles electrons from NADH, via FMN and iron-sulfur (Fe-S) centers, to quinones in the respiratory chain. The immediate electron acceptor for the enzyme in this species is believed to be a menaquinone. Couples the redox reaction to proton translocation (for every two electrons transferred, four hydrogen ions are translocated across the cytoplasmic membrane), and thus conserves the redox energy in a proton gradient. This Flavobacterium psychrophilum (strain ATCC 49511 / DSM 21280 / CIP 103535 / JIP02/86) protein is NADH-quinone oxidoreductase subunit N.